A 370-amino-acid polypeptide reads, in one-letter code: Tomoregulin-1 (370 aa).

The signal sequence occupies residues 1–36 (MDGLHPASWMLLLGSLAFWSASSLLLFSLALPGARA). Residues 37–320 (SNQLLSECHN…VPSRQKLTHV (284 aa)) are Extracellular-facing. A glycan (N-linked (GlcNAc...) asparagine) is linked at Asn53. Kazal-like domains follow at residues 88 to 135 (ICQF…PCFS) and 179 to 227 (VCNI…SCIE). Cystine bridges form between Cys89–Cys119, Cys93–Cys112, Cys101–Cys133, Cys180–Cys211, Cys184–Cys204, Cys193–Cys225, Cys265–Cys278, Cys273–Cys289, and Cys291–Cys300. Residues 261–301 (NYIPCSENYNGYCVHGKCELSYSSQKASCRCDSGYTGQYCD) enclose the EGF-like domain. A helical transmembrane segment spans residues 321-341 (LIAAIIGAVQIAIIVAIVMCI). Residues 342–370 (TRKCPKNNRGRRQKQNLGHFSSDTSSRMV) are Cytoplasmic-facing. The tract at residues 349-370 (NRGRRQKQNLGHFSSDTSSRMV) is disordered. Polar residues predominate over residues 356-370 (QNLGHFSSDTSSRMV).

Belongs to the tomoregulin family. In terms of assembly, interacts with cripto. As to expression, expressed at highest levels in brain, and at lower levels in neuroendocrine tissues. Present in neurons from the diencephalon (at protein level).

Its subcellular location is the cell membrane. Functionally, inhibits nodal/nr-1 and bmp signaling during neural patterning through interaction with cripto. The sequence is that of Tomoregulin-1 (tmeff1) from Xenopus laevis (African clawed frog).